The primary structure comprises 419 residues: UDP-N-acetylglucosamine 1-carboxyvinyltransferase (419 aa).

22-23 (KN) serves as a coordination point for phosphoenolpyruvate. Arg-93 contributes to the UDP-N-acetyl-alpha-D-glucosamine binding site. The active-site Proton donor is the Cys-117. 2-(S-cysteinyl)pyruvic acid O-phosphothioketal is present on Cys-117. UDP-N-acetyl-alpha-D-glucosamine is bound by residues Asp-307 and Ile-329.

The protein belongs to the EPSP synthase family. MurA subfamily.

The protein localises to the cytoplasm. The enzyme catalyses phosphoenolpyruvate + UDP-N-acetyl-alpha-D-glucosamine = UDP-N-acetyl-3-O-(1-carboxyvinyl)-alpha-D-glucosamine + phosphate. It participates in cell wall biogenesis; peptidoglycan biosynthesis. In terms of biological role, cell wall formation. Adds enolpyruvyl to UDP-N-acetylglucosamine. The chain is UDP-N-acetylglucosamine 1-carboxyvinyltransferase from Shewanella piezotolerans (strain WP3 / JCM 13877).